Reading from the N-terminus, the 438-residue chain is UDP-N-acetyl-D-mannosamine dehydrogenase (438 aa).

Positions 21, 22, 41, 46, 93, and 131 each coordinate NAD(+). Arginine 160, valine 161, lysine 212, asparagine 216, arginine 219, histidine 250, arginine 252, and glycine 263 together coordinate UDP-N-acetyl-alpha-D-mannosaminouronate. Lysine 212 serves as the catalytic Proton donor/acceptor. Cysteine 266 acts as the Nucleophile in catalysis. 2 residues coordinate UDP-N-acetyl-alpha-D-mannosaminouronate: tyrosine 323 and lysine 324. Arginine 331 contacts NAD(+). Lysine 409 is a UDP-N-acetyl-alpha-D-mannosaminouronate binding site.

The protein belongs to the UDP-glucose/GDP-mannose dehydrogenase family. In terms of assembly, homotetramer; probably dimer of dimers.

It catalyses the reaction UDP-N-acetyl-alpha-D-mannosamine + 2 NAD(+) + H2O = UDP-N-acetyl-alpha-D-mannosaminouronate + 2 NADH + 3 H(+). Its function is as follows. Catalyzes the four-electron oxidation of UDP-N-acetyl-D-mannosamine (UDP-ManNAc), reducing NAD(+) and releasing UDP-N-acetylmannosaminuronic acid (UDP-ManNAcA). The protein is UDP-N-acetyl-D-mannosamine dehydrogenase (wecC) of Methanococcus aeolicus (strain ATCC BAA-1280 / DSM 17508 / OCM 812 / Nankai-3).